The following is a 579-amino-acid chain: Transcription factor COE2 (579 aa).

The interaction with DNA stretch occupies residues 63 to 66 (RKSN). The C5-type zinc finger occupies 149 to 168 (CRVLLTHEVMCSRCCEKKSC). Interaction with DNA regions lie at residues 195–202 (NCLKTAGN) and 234–237 (NNSK). The IPT/TIG domain maps to 260-343 (PCIKAISPSE…KGAPGRFIYT (84 aa)). 3 disordered regions span residues 442–482 (GVSI…YGSN), 514–533 (AIMP…LPFS), and 549–579 (LRPQ…VPPM). The span at 449–459 (GQTSGQGYTRN) shows a compositional bias: polar residues. Low complexity-rich tracts occupy residues 460-472 (SSSL…PSSS) and 521-533 (PGSS…LPFS).

The protein belongs to the COE family.

It localises to the nucleus. The chain is Transcription factor COE2 (coe2) from Danio rerio (Zebrafish).